Reading from the N-terminus, the 83-residue chain is Short neurotoxin C (83 aa).

A signal peptide spans 1-21 (MKTLLLTLVVVTMVCLDLAYT). Disulfide bonds link C24–C45, C38–C62, C64–C75, and C76–C81.

This sequence belongs to the three-finger toxin family. Short-chain subfamily. Type I alpha-neurotoxin sub-subfamily. As to expression, expressed by the venom gland.

It is found in the secreted. Its function is as follows. Binds to muscle nicotinic acetylcholine receptor (nAChR) and inhibit acetylcholine from binding to the receptor, thereby impairing neuromuscular transmission. This chain is Short neurotoxin C, found in Laticauda colubrina (Yellow-lipped sea krait).